The chain runs to 251 residues: BRI3-binding protein (251 aa).

4 helical membrane-spanning segments follow: residues 13–33, 125–145, 146–166, and 185–205; these read AGLL…PGAQ, ALLL…TLGF, TFSV…VVLF, and VLPL…GFYW. Residues 217 to 247 are a coiled coil; the sequence is NPSVEEKLEHLEKQVRLLNIRLNRVLESLDR. Lys229 carries the post-translational modification N6-acetyllysine. Ser248 carries the post-translational modification Phosphoserine.

Interacts with LETMD1. Interacts with BRI3 (isoforms 1 and 2); the interaction with isoform 2 is weaker than with isoform 1. Interacts with BRI3; the interaction is weak. Interacts with TMEM238L. Most abundantly expressed in brain, liver and kidney. Overexpressed in leukemia and lymphoma cell lines, as well as in various carcinomas.

The protein localises to the mitochondrion outer membrane. In terms of biological role, involved in tumorigenesis and may function by stabilizing p53/TP53. This is BRI3-binding protein from Homo sapiens (Human).